The following is a 148-amino-acid chain: Angiogenin-1 (148 aa).

Residues 1-23 form the signal peptide; sequence MVMVLSPLLLVFILGLGLTPVAP. H37 functions as the Proton acceptor in the catalytic mechanism. R45 contributes to the tRNA binding site. Disulfide bonds link C50–C105, C63–C116, and C81–C131. The Nucleolar localization signal motif lies at 55-59; that stretch reads KNRRL. The tRNA site is built by C105 and I127. The active-site Proton donor is H138.

It belongs to the pancreatic ribonuclease family. In terms of assembly, homodimer. Interacts with RNH1; inhibiting ANG ribonuclease activity. As to expression, serum and milk.

It is found in the secreted. The protein resides in the nucleus. Its subcellular location is the nucleolus. It localises to the cytoplasm. The protein localises to the stress granule. Functionally, secreted ribonuclease that can either promote or restrict cell proliferation of target cells, depending on the context. Endocytosed in target cells via its receptor PLXNB2 and translocates to the cytoplasm or nucleus. Under stress conditions, localizes to the cytoplasm and promotes the assembly of stress granules (SGs): specifically cleaves a subset of tRNAs within anticodon loops to produce tRNA-derived stress-induced fragments (tiRNAs), resulting in translation repression and inhibition of cell proliferation. tiRNas also prevent formation of apoptosome, thereby promoting cell survival. Preferentially cleaves RNAs between a pyrimidine and an adenosine residue, suggesting that it cleaves the anticodon loop of tRNA(Ala) (32-UUAGCAU-38) after positions 33 and 36. Cleaves a subset of tRNAs, including tRNA(Ala), tRNA(Glu), tRNA(Gly), tRNA(Lys), tRNA(Val), tRNA(His), tRNA(Asp) and tRNA(Sec). Under growth conditions and in differentiated cells, translocates to the nucleus and stimulates ribosomal RNA (rRNA) transcription, including that containing the initiation site sequences of 45S rRNA, thereby promoting cell growth and proliferation. Angiogenin induces vascularization of normal and malignant tissues via its ability to promote rRNA transcription. The chain is Angiogenin-1 (ANG1) from Bos taurus (Bovine).